A 63-amino-acid chain; its full sequence is Sec-independent protein translocase protein TatA (63 aa).

Residues 1-21 (MGSLSMWHWLIVLVIVLLLFG) traverse the membrane as a helical segment. The tract at residues 43–63 (MTDEDAPETAKTVDHKADETK) is disordered. The segment covering 53–63 (KTVDHKADETK) has biased composition (basic and acidic residues).

The protein belongs to the TatA/E family. As to quaternary structure, the Tat system comprises two distinct complexes: a TatABC complex, containing multiple copies of TatA, TatB and TatC subunits, and a separate TatA complex, containing only TatA subunits. Substrates initially bind to the TatABC complex, which probably triggers association of the separate TatA complex to form the active translocon.

It localises to the cell inner membrane. Functionally, part of the twin-arginine translocation (Tat) system that transports large folded proteins containing a characteristic twin-arginine motif in their signal peptide across membranes. TatA could form the protein-conducting channel of the Tat system. The chain is Sec-independent protein translocase protein TatA from Rhizobium etli (strain ATCC 51251 / DSM 11541 / JCM 21823 / NBRC 15573 / CFN 42).